The primary structure comprises 37 residues: Cytochrome b6-f complex subunit 5 (37 aa).

A helical membrane pass occupies residues 5 to 25 (LLSGIVLGMITVSAFGLFVAA).

This sequence belongs to the PetG family. In terms of assembly, the 4 large subunits of the cytochrome b6-f complex are cytochrome b6, subunit IV (17 kDa polypeptide, PetD), cytochrome f and the Rieske protein, while the 4 small subunits are PetG, PetL, PetM and PetN. The complex functions as a dimer.

It localises to the plastid. The protein resides in the chloroplast thylakoid membrane. Its function is as follows. Component of the cytochrome b6-f complex, which mediates electron transfer between photosystem II (PSII) and photosystem I (PSI), cyclic electron flow around PSI, and state transitions. PetG is required for either the stability or assembly of the cytochrome b6-f complex. This is Cytochrome b6-f complex subunit 5 from Thalassiosira pseudonana (Marine diatom).